A 451-amino-acid polypeptide reads, in one-letter code: Nicotinamide phosphoribosyltransferase (451 aa).

Arg-209 is a diphosphate binding site. Asp-232 provides a ligand contact to beta-nicotinamide D-ribonucleotide. Residues His-248 and Arg-309 each contribute to the diphosphate site. Residues 309 to 311 (RPD), 364 to 365 (GD), and Arg-403 contribute to the beta-nicotinamide D-ribonucleotide site.

The protein belongs to the NAPRTase family.

It carries out the reaction beta-nicotinamide D-ribonucleotide + diphosphate = 5-phospho-alpha-D-ribose 1-diphosphate + nicotinamide + H(+). It functions in the pathway cofactor biosynthesis; NAD(+) biosynthesis; nicotinamide D-ribonucleotide from 5-phospho-alpha-D-ribose 1-diphosphate and nicotinamide: step 1/1. Its function is as follows. Catalyzes the condensation of nicotinamide with 5-phosphoribosyl-1-pyrophosphate to yield nicotinamide mononucleotide, an intermediate in the biosynthesis of NAD. The chain is Nicotinamide phosphoribosyltransferase from Mycoplasma pneumoniae (strain ATCC 29342 / M129 / Subtype 1) (Mycoplasmoides pneumoniae).